The following is a 154-amino-acid chain: Terephthalate 1,2-dioxygenase, terminal oxygenase component subunit beta 2 (154 aa).

It belongs to the bacterial ring-hydroxylating dioxygenase beta subunit family. In terms of assembly, heterotetramer composed of 2 alpha (TphA2I and TphA2II) and 2 beta (TphA3I and TphA3II) subunits. Part of a multicomponent enzyme system composed of a reductase (TphA1I or TphA1II) and a two-subunit oxygenase component (TphA2I or TphA2II and TphA3I or TphA3II). The cofactor is Fe cation.

The enzyme catalyses terephthalate + NADH + O2 + H(+) = (3S,4R)-3,4-dihydroxycyclohexa-1,5-diene-1,4-dicarboxylate + NAD(+). With respect to regulation, inhibited by EDTA. Its function is as follows. Component of the terephthalate 1,2-dioxygenase multicomponent enzyme system which catalyzes the dioxygenation of terephthalate (TER/TPA) to 1,2-dihydroxy-3,5-cyclohexadiene-1,4-dicarboxylic acid (DCD). It can also use 2,5-dicarboxypyridine (PDC) and 1,4-napthalenedicarboxylic acid (NDC) as substrates, and preferentially uses NADPH which is the physiological electron donor. The chain is Terephthalate 1,2-dioxygenase, terminal oxygenase component subunit beta 2 (tphA3II) from Comamonas sp.